We begin with the raw amino-acid sequence, 127 residues long: Histone H2B type 1-A (127 aa).

An N-acetylproline modification is found at Pro2. An N6-acetyllysine; alternate mark is found at Lys7, Lys13, Lys14, Lys17, Lys18, Lys22, and Lys25. 8 positions are modified to N6-crotonyllysine; alternate: Lys7, Lys13, Lys14, Lys17, Lys18, Lys22, Lys25, and Lys36. 2 positions are modified to N6-lactoyllysine; alternate: Lys7 and Lys13. A Glycyl lysine isopeptide (Lys-Gly) (interchain with G-Cter in SUMO2); alternate cross-link involves residue Lys7. Lys17, Lys18, Lys22, and Lys25 each carry N6-lactoyllysine; alternate. Lys22 participates in a covalent cross-link: Glycyl lysine isopeptide (Lys-Gly) (interchain with G-Cter in SUMO2); alternate. The residue at position 36 (Lys36) is an N6-succinyllysine; alternate. Lys36 participates in a covalent cross-link: Glycyl lysine isopeptide (Lys-Gly) (interchain with G-Cter in ubiquitin); alternate. A Phosphoserine modification is found at Ser38. An N6-lactoyllysine; alternate modification is found at Lys45. At Lys48 the chain carries N6-methyllysine. Lys59 is subject to N6,N6-dimethyllysine. Arg81 carries the dimethylated arginine modification. An N6-acetyllysine; alternate modification is found at Lys87. Lys87 bears the N6-lactoyllysine; alternate mark. Lys87 bears the N6,N6,N6-trimethyllysine; alternate mark. Omega-N-methylarginine is present on residues Arg88 and Arg94. An N6-lactoyllysine; alternate modification is found at Lys110. Position 110 is an N6-methyllysine (Lys110). Thr117 is subject to Phosphothreonine. Lys118 and Lys122 each carry N6-lactoyllysine; alternate. N6-succinyllysine; alternate is present on residues Lys118 and Lys122. The residue at position 118 (Lys118) is an N6-methylated lysine; alternate. A Glycyl lysine isopeptide (Lys-Gly) (interchain with G-Cter in ubiquitin); alternate cross-link involves residue Lys122.

This sequence belongs to the histone H2B family. The nucleosome is a histone octamer containing two molecules each of H2A, H2B, H3 and H4 assembled in one H3-H4 heterotetramer and two H2A-H2B heterodimers. Interacts with H2AB1; preferentially dimerizes with H2AB1 to form nucleosomes. In terms of processing, monoubiquitination at Lys-36 by the MSL1/MSL2 dimer is required for histone H3 'Lys-4' (H3K4me) and 'Lys-79' (H3K79me) methylation and transcription activation at specific gene loci, such as HOXA9 and MEIS1 loci. Similarly, monoubiquitination of Lys-122 (H2BK120Ub) by the RNF20/40 complex gives a specific tag for epigenetic transcriptional activation and is also prerequisite for histone H3 'Lys-4' and 'Lys-79' methylation. It also functions cooperatively with the FACT dimer to stimulate elongation by RNA polymerase II. H2BK120Ub also acts as a regulator of mRNA splicing: deubiquitination by USP49 is required for efficient cotranscriptional splicing of a large set of exons. Crotonylation (Kcr) is specifically present in male germ cells and marks testis-specific genes in post-meiotic cells, including X-linked genes that escape sex chromosome inactivation in haploid cells. Crotonylation marks active promoters and enhancers and confers resistance to transcriptional repressors. It is also associated with post-meiotically activated genes on autosomes. Post-translationally, acetylated during spermatogenesis. Acetylated form is most abundant in spermatogonia compared to spermatocytes and round spermatids. In terms of processing, phosphorylated at Thr-117 in spermatogonia, spermatocytes and round spermatids. Methylated at Lys-118 in spermatogonia, spermatocytes and round spermatids. Post-translationally, lactylated in macrophages by EP300/P300 by using lactoyl-CoA directly derived from endogenous or exogenous lactate, leading to stimulates gene transcription. In terms of tissue distribution, mainly expressed in testis, and the corresponding protein is also present in mature sperm. Also present in metaphase oocytes (at protein level).

It localises to the nucleus. Its subcellular location is the chromosome. Functionally, variant histone specifically required to direct the transformation of dissociating nucleosomes to protamine in male germ cells. Entirely replaces classical histone H2B prior nucleosome to protamine transition and probably acts as a nucleosome dissociating factor that creates a more dynamic chromatin, facilitating the large-scale exchange of histones. In condensing spermatids, the heterodimer between H2AB1 and H2BC1/TH2B is loaded onto the nucleosomes and promotes loading of transition proteins (TNP1 and TNP2) onto the nucleosomes. Inclusion of the H2AB1-H2BC1/TH2B dimer into chromatin opens the nucleosomes, releasing the nucleosomal DNA ends and allowing the invasion of nucleosomes by transition proteins (TNP1 and TNP2). Then, transition proteins drive the recruitment and processing of protamines, which are responsible for histone eviction. Also expressed maternally and is present in the female pronucleus, suggesting a similar role in protamine replacement by nucleosomes at fertilization. Core component of nucleosome. Nucleosomes wrap and compact DNA into chromatin, limiting DNA accessibility to the cellular machineries which require DNA as a template. Histones thereby play a central role in transcription regulation, DNA repair, DNA replication and chromosomal stability. DNA accessibility is regulated via a complex set of post-translational modifications of histones, also called histone code, and nucleosome remodeling. The polypeptide is Histone H2B type 1-A (Mus musculus (Mouse)).